A 348-amino-acid chain; its full sequence is MTAPSQVLKIRRPDDWHLHLRDGDMLKTVVPYTSEIYGRAIVMPNLAPPVTTVEAAVAYRQRILDAVPAGHDFTPLMTCYLTDSLDPNELERGFNEGVFTAAKLYPANATTNSSHGVTSIDAIMPVLERMEKIGMPLLVHGEVTHADIDIFDREARFIESVMEPLRQRLTALKVVFEHITTKDAADYVRDGNERLAATITPQHLMFNRNHMLVGGVRPHLYCLPILKRNIHQQALRELVASGFNRVFLGTDSAPHARHRKESSCGCAGCFSAPTALGSYATVFEEMNALQHFEAFCSVNGPQFYGLPVNDTFIELVREEQQVAESIALTDDTLVPFLAGETVRWSVKQ.

2 residues coordinate Zn(2+): His-17 and His-19. Substrate-binding positions include 19-21 (HLR) and Asn-45. The Zn(2+) site is built by Lys-103, His-140, and His-178. Lys-103 is modified (N6-carboxylysine). His-140 contributes to the substrate binding site. Leu-223 is a binding site for substrate. Asp-251 contacts Zn(2+). Residue Asp-251 is part of the active site. His-255 and Ala-267 together coordinate substrate.

The protein belongs to the metallo-dependent hydrolases superfamily. DHOase family. Class II DHOase subfamily. As to quaternary structure, homodimer. Zn(2+) serves as cofactor.

The catalysed reaction is (S)-dihydroorotate + H2O = N-carbamoyl-L-aspartate + H(+). It functions in the pathway pyrimidine metabolism; UMP biosynthesis via de novo pathway; (S)-dihydroorotate from bicarbonate: step 3/3. Its function is as follows. Catalyzes the reversible cyclization of carbamoyl aspartate to dihydroorotate. The polypeptide is Dihydroorotase (Shigella dysenteriae serotype 1 (strain Sd197)).